Consider the following 487-residue polypeptide: Chromosomal replication initiator protein DnaA (487 aa).

The segment at 1–71 (MMHDALFERF…TSLVQSEDPD (71 aa)) is domain I, interacts with DnaA modulators. Residues 71–141 (DVLKVEILVR…QGGSGPLFGS (71 aa)) form a domain II region. The segment at 142–364 (PLDTRFTFDT…GAFNQLMFRR (223 aa)) is domain III, AAA+ region. ATP contacts are provided by Gly-188, Gly-190, Lys-191, and Thr-192. A domain IV, binds dsDNA region spans residues 365–487 (SFEPNLSVDR…LKRLINENNA (123 aa)).

This sequence belongs to the DnaA family. As to quaternary structure, oligomerizes as a right-handed, spiral filament on DNA at oriC.

The protein resides in the cytoplasm. In terms of biological role, plays an essential role in the initiation and regulation of chromosomal replication. ATP-DnaA binds to the origin of replication (oriC) to initiate formation of the DNA replication initiation complex once per cell cycle. Binds the DnaA box (a 9 base pair repeat at the origin) and separates the double-stranded (ds)DNA. Forms a right-handed helical filament on oriC DNA; dsDNA binds to the exterior of the filament while single-stranded (ss)DNA is stabiized in the filament's interior. The ATP-DnaA-oriC complex binds and stabilizes one strand of the AT-rich DNA unwinding element (DUE), permitting loading of DNA polymerase. After initiation quickly degrades to an ADP-DnaA complex that is not apt for DNA replication. Binds acidic phospholipids. The polypeptide is Chromosomal replication initiator protein DnaA (Agrobacterium fabrum (strain C58 / ATCC 33970) (Agrobacterium tumefaciens (strain C58))).